The following is a 393-amino-acid chain: S-adenosylmethionine synthase 2 (393 aa).

A Mg(2+)-binding site is contributed by E9. H15 lines the ATP pocket. E43 is a binding site for K(+). 2 residues coordinate L-methionine: E56 and Q99. ATP contacts are provided by residues 167 to 169 (DGK), 235 to 238 (SGRF), D246, 252 to 253 (RK), A269, K273, and K277. D246 is an L-methionine binding site. K277 lines the L-methionine pocket.

This sequence belongs to the AdoMet synthase family. As to quaternary structure, homotetramer. It depends on Mn(2+) as a cofactor. The cofactor is Mg(2+). Co(2+) serves as cofactor. Requires K(+) as cofactor.

The protein resides in the cytoplasm. The catalysed reaction is L-methionine + ATP + H2O = S-adenosyl-L-methionine + phosphate + diphosphate. It participates in amino-acid biosynthesis; S-adenosyl-L-methionine biosynthesis; S-adenosyl-L-methionine from L-methionine: step 1/1. In terms of biological role, catalyzes the formation of S-adenosylmethionine from methionine and ATP. The reaction comprises two steps that are both catalyzed by the same enzyme: formation of S-adenosylmethionine (AdoMet) and triphosphate, and subsequent hydrolysis of the triphosphate. The chain is S-adenosylmethionine synthase 2 (SAMS2) from Elaeagnus umbellata (Autumn olive).